The following is a 372-amino-acid chain: Aminomethyltransferase (372 aa).

It belongs to the GcvT family. As to quaternary structure, the glycine cleavage system is composed of four proteins: P, T, L and H.

It carries out the reaction N(6)-[(R)-S(8)-aminomethyldihydrolipoyl]-L-lysyl-[protein] + (6S)-5,6,7,8-tetrahydrofolate = N(6)-[(R)-dihydrolipoyl]-L-lysyl-[protein] + (6R)-5,10-methylene-5,6,7,8-tetrahydrofolate + NH4(+). Its function is as follows. The glycine cleavage system catalyzes the degradation of glycine. In Burkholderia mallei (strain NCTC 10247), this protein is Aminomethyltransferase.